We begin with the raw amino-acid sequence, 257 residues long: MDRIIEKLDRGWWVVSHEQKLWLPGGELPHGEAVNFDLVGQHALHIGEWQGESVWMVRQDRRHDMGSLRQVLDQDPGLFQLAGRGIQLAEFYRSHKFCGYCGHPMHASKSEWAMLCSHCRERYYPQIAPCIIVAIRRDDSILLAQHTRHRNGVHTVLAGFVEVGETLEQAVAREVMEESGIKVKNLRYVTSQPWPFPQSLMTAFMADYADGDIVVDKKELLTADWYRYDNLPLLPPPGTVARRLIEDTVAMCRAEFE.

R69 contacts substrate. Zn(2+) is bound by residues C98 and C101. E111 contacts substrate. C116 and C119 together coordinate Zn(2+). Y124 serves as a coordination point for substrate. One can recognise a Nudix hydrolase domain in the interval 125–248 (PQIAPCIIVA…TVARRLIEDT (124 aa)). Residues A158, E174, and E178 each contribute to the a divalent metal cation site. A Nudix box motif is present at residues 159–180 (GFVEVGETLEQAVAREVMEESG). Substrate is bound at residue 192 to 199 (QPWPFPQS). E219 lines the a divalent metal cation pocket. A241 is a substrate binding site.

Belongs to the Nudix hydrolase family. NudC subfamily. As to quaternary structure, homodimer. The cofactor is Mg(2+). Requires Mn(2+) as cofactor. Zn(2+) serves as cofactor.

The catalysed reaction is a 5'-end NAD(+)-phospho-ribonucleoside in mRNA + H2O = a 5'-end phospho-adenosine-phospho-ribonucleoside in mRNA + beta-nicotinamide D-ribonucleotide + 2 H(+). The enzyme catalyses NAD(+) + H2O = beta-nicotinamide D-ribonucleotide + AMP + 2 H(+). It catalyses the reaction NADH + H2O = reduced beta-nicotinamide D-ribonucleotide + AMP + 2 H(+). In terms of biological role, mRNA decapping enzyme that specifically removes the nicotinamide adenine dinucleotide (NAD) cap from a subset of mRNAs by hydrolyzing the diphosphate linkage to produce nicotinamide mononucleotide (NMN) and 5' monophosphate mRNA. The NAD-cap is present at the 5'-end of some mRNAs and stabilizes RNA against 5'-processing. Has preference for mRNAs with a 5'-end purine. Catalyzes the hydrolysis of a broad range of dinucleotide pyrophosphates. This is NAD-capped RNA hydrolase NudC from Klebsiella pneumoniae (strain 342).